Consider the following 267-residue polypeptide: Hemin import ATP-binding protein HmuV (267 aa).

The 241-residue stretch at 3–243 (LEVRGIEVWR…ELVARVFGLR (241 aa)) folds into the ABC transporter domain. Residue 35-42 (GPNGAGKS) coordinates ATP.

The protein belongs to the ABC transporter superfamily. Heme (hemin) importer (TC 3.A.1.14.5) family. In terms of assembly, the complex is composed of two ATP-binding proteins (HmuV), two transmembrane proteins (HmuU) and a solute-binding protein (HmuT).

The protein resides in the cell inner membrane. In terms of biological role, part of the ABC transporter complex HmuTUV involved in hemin import. Responsible for energy coupling to the transport system. The sequence is that of Hemin import ATP-binding protein HmuV from Myxococcus xanthus (strain DK1622).